The chain runs to 116 residues: Ribosome-binding factor A (116 aa).

This sequence belongs to the RbfA family. As to quaternary structure, monomer. Binds 30S ribosomal subunits, but not 50S ribosomal subunits or 70S ribosomes.

Its subcellular location is the cytoplasm. In terms of biological role, one of several proteins that assist in the late maturation steps of the functional core of the 30S ribosomal subunit. Associates with free 30S ribosomal subunits (but not with 30S subunits that are part of 70S ribosomes or polysomes). Required for efficient processing of 16S rRNA. May interact with the 5'-terminal helix region of 16S rRNA. This is Ribosome-binding factor A from Staphylococcus aureus (strain JH9).